The sequence spans 174 residues: Imidazole glycerol phosphate synthase subunit HisH (174 aa).

One can recognise a Glutamine amidotransferase type-1 domain in the interval 2–174 (SVVIINTGCA…AAVNKDNFWR (173 aa)). Residue Cys77 is the Nucleophile of the active site.

As to quaternary structure, heterodimer of HisH and HisF.

The protein resides in the cytoplasm. The catalysed reaction is 5-[(5-phospho-1-deoxy-D-ribulos-1-ylimino)methylamino]-1-(5-phospho-beta-D-ribosyl)imidazole-4-carboxamide + L-glutamine = D-erythro-1-(imidazol-4-yl)glycerol 3-phosphate + 5-amino-1-(5-phospho-beta-D-ribosyl)imidazole-4-carboxamide + L-glutamate + H(+). The enzyme catalyses L-glutamine + H2O = L-glutamate + NH4(+). It functions in the pathway amino-acid biosynthesis; L-histidine biosynthesis; L-histidine from 5-phospho-alpha-D-ribose 1-diphosphate: step 5/9. Functionally, IGPS catalyzes the conversion of PRFAR and glutamine to IGP, AICAR and glutamate. The HisH subunit catalyzes the hydrolysis of glutamine to glutamate and ammonia as part of the synthesis of IGP and AICAR. The resulting ammonia molecule is channeled to the active site of HisF. The polypeptide is Imidazole glycerol phosphate synthase subunit HisH (hisH) (Buchnera aphidicola subsp. Schlechtendalia chinensis).